The chain runs to 520 residues: Ribonuclease Y (520 aa).

The helical transmembrane segment at 4–24 threads the bilayer; that stretch reads TVWILISILLATVGAVVGFFV. The KH domain occupies 210–273; it reads TVSVVNLPND…ETARIALDKL (64 aa). An HD domain is found at 336–429; it reads VLKHSMEVAY…VAAADALSAA (94 aa).

The protein belongs to the RNase Y family.

Its subcellular location is the cell membrane. In terms of biological role, endoribonuclease that initiates mRNA decay. This chain is Ribonuclease Y, found in Bacillus cereus (strain ZK / E33L).